Reading from the N-terminus, the 151-residue chain is Peptide deformylase (151 aa).

2 residues coordinate Fe cation: C88 and H130. E131 is a catalytic residue. A Fe cation-binding site is contributed by H134.

Belongs to the polypeptide deformylase family. Requires Fe(2+) as cofactor.

It catalyses the reaction N-terminal N-formyl-L-methionyl-[peptide] + H2O = N-terminal L-methionyl-[peptide] + formate. Removes the formyl group from the N-terminal Met of newly synthesized proteins. Requires at least a dipeptide for an efficient rate of reaction. N-terminal L-methionine is a prerequisite for activity but the enzyme has broad specificity at other positions. The protein is Peptide deformylase of Heliobacterium modesticaldum (strain ATCC 51547 / Ice1).